The following is a 324-amino-acid chain: Coproporphyrin III ferrochelatase (324 aa).

Histidine 184 and glutamate 266 together coordinate Fe(2+).

The protein belongs to the ferrochelatase family.

The protein resides in the cytoplasm. The enzyme catalyses Fe-coproporphyrin III + 2 H(+) = coproporphyrin III + Fe(2+). It participates in porphyrin-containing compound metabolism; protoheme biosynthesis. In terms of biological role, involved in coproporphyrin-dependent heme b biosynthesis. Catalyzes the insertion of ferrous iron into coproporphyrin III to form Fe-coproporphyrin III. This is Coproporphyrin III ferrochelatase from Lactiplantibacillus plantarum (strain ATCC BAA-793 / NCIMB 8826 / WCFS1) (Lactobacillus plantarum).